We begin with the raw amino-acid sequence, 704 residues long: Elongation factor G (704 aa).

In terms of domain architecture, tr-type G spans 8–290 (ARYRNIGISA…AVIDYLPSPV (283 aa)). GTP-binding positions include 17-24 (AHIDAGKT), 88-92 (DTPGH), and 142-145 (NKMD).

Belongs to the TRAFAC class translation factor GTPase superfamily. Classic translation factor GTPase family. EF-G/EF-2 subfamily.

Its subcellular location is the cytoplasm. Functionally, catalyzes the GTP-dependent ribosomal translocation step during translation elongation. During this step, the ribosome changes from the pre-translocational (PRE) to the post-translocational (POST) state as the newly formed A-site-bound peptidyl-tRNA and P-site-bound deacylated tRNA move to the P and E sites, respectively. Catalyzes the coordinated movement of the two tRNA molecules, the mRNA and conformational changes in the ribosome. In Cronobacter sakazakii (strain ATCC BAA-894) (Enterobacter sakazakii), this protein is Elongation factor G.